We begin with the raw amino-acid sequence, 392 residues long: Fasciculation and elongation protein zeta-1 (392 aa).

Residues 1–36 (MEAPLVSLDEEFEDIRPSCTEEPEEKPQCLYGTSPH) are disordered. The residue at position 58 (serine 58) is a Phosphoserine. The interval 175–196 (MQNSPDPEEEEEVLEEEDGGEI) is disordered. Positions 180 to 194 (DPEEEEEVLEEEDGG) are enriched in acidic residues. Residues 230 to 298 (SELTELLDRV…KKRRKEKGLS (69 aa)) are a coiled coil. Residues serine 298 and serine 316 each carry the phosphoserine modification.

Belongs to the zygin family. In terms of assembly, homodimer. Interacts with the NH2-terminal variable region (V1) of PKC zeta and weakly with that of PKC epsilon. Interacts with UBE4B and SAP30L. Interacts with SCOC and ULK1; SCOC interferes with ULK1-binding to FEZ1. Directly interacts with SCOC and UVRAG. Stabilizes the interaction between SCOC and UVRAG during amino acid starvation. Phosphorylated by protein kinase C zeta; which enhances interaction with UBE4B and polyubiquitination. Post-translationally, polyubiquitinated in a UBE4B-dependent manner; which does not lead to proteasomal degradation and may be important for neurogenic activity. Polyubiquitin linkage seems to be mainly through Lys-26.

It is found in the cytoplasm. The protein localises to the cytoskeleton. It localises to the microtubule organizing center. The protein resides in the centrosome. Its subcellular location is the cell membrane. Functionally, may be involved in axonal outgrowth as component of the network of molecules that regulate cellular morphology and axon guidance machinery. May participate in the transport of mitochondria and other cargos along microtubules. This chain is Fasciculation and elongation protein zeta-1 (Fez1), found in Mus musculus (Mouse).